Here is a 278-residue protein sequence, read N- to C-terminus: Indole-3-glycerol phosphate synthase (278 aa).

Belongs to the TrpC family.

It catalyses the reaction 1-(2-carboxyphenylamino)-1-deoxy-D-ribulose 5-phosphate + H(+) = (1S,2R)-1-C-(indol-3-yl)glycerol 3-phosphate + CO2 + H2O. Its pathway is amino-acid biosynthesis; L-tryptophan biosynthesis; L-tryptophan from chorismate: step 4/5. This chain is Indole-3-glycerol phosphate synthase, found in Pseudomonas fluorescens (strain SBW25).